Reading from the N-terminus, the 301-residue chain is Lysozyme-like protein 3 (301 aa).

The signal sequence occupies residues 1–15; sequence MKLFALLVSITLCYS. Positions 64-282 constitute a Ch-type lysozyme domain; the sequence is HAYSVDISFH…HLSQIVHFST (219 aa).

The protein belongs to the glycosyl hydrolase 25 family.

Functionally, plays a role in the stress response to heavy metals such as copper, probably in a kgb-1-dependent manner. The chain is Lysozyme-like protein 3 from Caenorhabditis elegans.